Here is a 301-residue protein sequence, read N- to C-terminus: MPGIKEIRTKIKSVQNTRKITKAMEMVAASKMRKAQERMRAGRPYATKVREIAAHLMQANPEYSHPYLVEREVKAVGVVLVTTDKGLCGGLNTNISRVTLSKLKEFEQRSIKVQATAFGNKGLGLLTRIGAKLVSQEVQLGDKPDLDRLLGAIKVQLDDYLEGRIDALYVATTRFVNTMKQEPVFLRLLPLSNGLDDPFQSGVETLAKTAEIKSDYSWDYIYEPDAKSVIDDLLQRYVEGLLYQAVAENMASEQSARMVAMKSASDNAKKVIGDLQLVYNKTRQAAITKEISEIVGGAAAV.

The protein belongs to the ATPase gamma chain family. As to quaternary structure, F-type ATPases have 2 components, CF(1) - the catalytic core - and CF(0) - the membrane proton channel. CF(1) has five subunits: alpha(3), beta(3), gamma(1), delta(1), epsilon(1). CF(0) has three main subunits: a, b and c.

The protein localises to the cell inner membrane. Its function is as follows. Produces ATP from ADP in the presence of a proton gradient across the membrane. The gamma chain is believed to be important in regulating ATPase activity and the flow of protons through the CF(0) complex. The chain is ATP synthase gamma chain from Bordetella pertussis (strain Tohama I / ATCC BAA-589 / NCTC 13251).